A 498-amino-acid chain; its full sequence is UDP-N-acetylmuramate--L-alanine ligase (498 aa).

133–139 (GSSGKTT) contributes to the ATP binding site.

The protein belongs to the MurCDEF family.

It is found in the cytoplasm. It carries out the reaction UDP-N-acetyl-alpha-D-muramate + L-alanine + ATP = UDP-N-acetyl-alpha-D-muramoyl-L-alanine + ADP + phosphate + H(+). It functions in the pathway cell wall biogenesis; peptidoglycan biosynthesis. In terms of biological role, cell wall formation. This Wolbachia pipientis wMel protein is UDP-N-acetylmuramate--L-alanine ligase.